The following is a 266-amino-acid chain: Methyl-coenzyme M reductase II subunit gamma (266 aa).

Residue R123 participates in coenzyme M binding.

This sequence belongs to the methyl-coenzyme M reductase gamma subunit family. In terms of assembly, MCR is a hexamer of two alpha, two beta, and two gamma chains, forming a dimer of heterotrimers. It depends on coenzyme F430 as a cofactor.

It carries out the reaction coenzyme B + methyl-coenzyme M = methane + coenzyme M-coenzyme B heterodisulfide. The protein operates within one-carbon metabolism; methyl-coenzyme M reduction; methane from methyl-coenzyme M: step 1/1. Functionally, component of the methyl-coenzyme M reductase (MCR) I that catalyzes the reductive cleavage of methyl-coenzyme M (CoM-S-CH3 or 2-(methylthio)ethanesulfonate) using coenzyme B (CoB or 7-mercaptoheptanoylthreonine phosphate) as reductant which results in the production of methane and the mixed heterodisulfide of CoB and CoM (CoM-S-S-CoB). This is the final step in methanogenesis. The sequence is that of Methyl-coenzyme M reductase II subunit gamma (mrtG) from Methanocaldococcus jannaschii (strain ATCC 43067 / DSM 2661 / JAL-1 / JCM 10045 / NBRC 100440) (Methanococcus jannaschii).